The following is a 197-amino-acid chain: Sec-independent protein translocase protein TatB (197 aa).

The chain crosses the membrane as a helical span at residues 1 to 21 (MFDIGFGELLLVMVLGLIVLG). The disordered stretch occupies residues 93 to 197 (KRGYTETPSP…ASARQPSDSR (105 aa)). 2 stretches are compositionally biased toward basic and acidic residues: residues 104 to 113 (KSDDPKKSGD) and 160 to 169 (NHNDGRHATS). Low complexity predominate over residues 180 to 197 (PEQSQPSAASARQPSDSR).

Belongs to the TatB family. The Tat system comprises two distinct complexes: a TatABC complex, containing multiple copies of TatA, TatB and TatC subunits, and a separate TatA complex, containing only TatA subunits. Substrates initially bind to the TatABC complex, which probably triggers association of the separate TatA complex to form the active translocon.

It localises to the cell inner membrane. Functionally, part of the twin-arginine translocation (Tat) system that transports large folded proteins containing a characteristic twin-arginine motif in their signal peptide across membranes. Together with TatC, TatB is part of a receptor directly interacting with Tat signal peptides. TatB may form an oligomeric binding site that transiently accommodates folded Tat precursor proteins before their translocation. In Pectobacterium atrosepticum (strain SCRI 1043 / ATCC BAA-672) (Erwinia carotovora subsp. atroseptica), this protein is Sec-independent protein translocase protein TatB.